We begin with the raw amino-acid sequence, 363 residues long: 3-dehydroquinate synthase (363 aa).

NAD(+)-binding positions include 134 to 135 (TT), Lys-147, Lys-156, and 174 to 177 (TLKT). 3 residues coordinate Zn(2+): Glu-189, His-254, and His-271.

It belongs to the sugar phosphate cyclases superfamily. Dehydroquinate synthase family. Requires Co(2+) as cofactor. Zn(2+) serves as cofactor. NAD(+) is required as a cofactor.

It is found in the cytoplasm. It carries out the reaction 7-phospho-2-dehydro-3-deoxy-D-arabino-heptonate = 3-dehydroquinate + phosphate. It participates in metabolic intermediate biosynthesis; chorismate biosynthesis; chorismate from D-erythrose 4-phosphate and phosphoenolpyruvate: step 2/7. Its function is as follows. Catalyzes the conversion of 3-deoxy-D-arabino-heptulosonate 7-phosphate (DAHP) to dehydroquinate (DHQ). In Prochlorococcus marinus (strain MIT 9515), this protein is 3-dehydroquinate synthase.